The chain runs to 416 residues: CCA-adding enzyme (416 aa).

Ser-42 and Lys-45 together coordinate ATP. CTP is bound by residues Ser-42 and Lys-45. 3 residues coordinate Mg(2+): Asp-54, Asp-56, and Asp-107. Residues His-130, Lys-150, and Tyr-159 each contribute to the ATP site. CTP is bound by residues His-130, Lys-150, and Tyr-159.

It belongs to the tRNA nucleotidyltransferase/poly(A) polymerase family. Archaeal CCA-adding enzyme subfamily. As to quaternary structure, homodimer. The cofactor is Mg(2+).

The catalysed reaction is a tRNA precursor + 2 CTP + ATP = a tRNA with a 3' CCA end + 3 diphosphate. It catalyses the reaction a tRNA with a 3' CCA end + 2 CTP + ATP = a tRNA with a 3' CCACCA end + 3 diphosphate. Functionally, catalyzes the addition and repair of the essential 3'-terminal CCA sequence in tRNAs without using a nucleic acid template. Adds these three nucleotides in the order of C, C, and A to the tRNA nucleotide-73, using CTP and ATP as substrates and producing inorganic pyrophosphate. tRNA 3'-terminal CCA addition is required both for tRNA processing and repair. Also involved in tRNA surveillance by mediating tandem CCA addition to generate a CCACCA at the 3' terminus of unstable tRNAs. While stable tRNAs receive only 3'-terminal CCA, unstable tRNAs are marked with CCACCA and rapidly degraded. In Sulfolobus acidocaldarius (strain ATCC 33909 / DSM 639 / JCM 8929 / NBRC 15157 / NCIMB 11770), this protein is CCA-adding enzyme.